A 450-amino-acid chain; its full sequence is 23S rRNA (uracil(1939)-C(5))-methyltransferase RlmD (450 aa).

In terms of domain architecture, TRAM spans Ser12–Lys70. [4Fe-4S] cluster-binding residues include Cys83, Cys89, Cys92, and Cys171. Gln283, Phe312, Asn317, Glu333, Asp360, and Asp380 together coordinate S-adenosyl-L-methionine. Cys406 functions as the Nucleophile in the catalytic mechanism.

It belongs to the class I-like SAM-binding methyltransferase superfamily. RNA M5U methyltransferase family. RlmD subfamily.

It carries out the reaction uridine(1939) in 23S rRNA + S-adenosyl-L-methionine = 5-methyluridine(1939) in 23S rRNA + S-adenosyl-L-homocysteine + H(+). Functionally, catalyzes the formation of 5-methyl-uridine at position 1939 (m5U1939) in 23S rRNA. This is 23S rRNA (uracil(1939)-C(5))-methyltransferase RlmD from Shewanella sp. (strain W3-18-1).